A 112-amino-acid polypeptide reads, in one-letter code: MDINQNLGNLMKEAQKMQQRMQEAQQQLSQLVVSGESGGGMVTIKMNGRHDVTEVKIKPTLMDEDIEMLEDLIAAAVNDAVRKIEKASKEKISQLTAGLNIPTDLMGGKEGE.

The protein belongs to the YbaB/EbfC family. Homodimer.

It is found in the cytoplasm. The protein resides in the nucleoid. In terms of biological role, binds to DNA and alters its conformation. May be involved in regulation of gene expression, nucleoid organization and DNA protection. The protein is Nucleoid-associated protein lpp2803 of Legionella pneumophila (strain Paris).